The following is a 318-amino-acid chain: Glutathione synthetase (318 aa).

In terms of domain architecture, ATP-grasp spans 124 to 310 (EKLFTAWFPE…ITGKLMDAIE (187 aa)). An ATP-binding site is contributed by 150–207 (FREQHGDVILKPLDGMGGASIFRVKEGDPNLSVIIETLTNHGQNYCMAQTFVPDISNG). 2 residues coordinate Mg(2+): glutamate 281 and asparagine 283.

The protein belongs to the prokaryotic GSH synthase family. It depends on Mg(2+) as a cofactor. The cofactor is Mn(2+).

It carries out the reaction gamma-L-glutamyl-L-cysteine + glycine + ATP = glutathione + ADP + phosphate + H(+). Its pathway is sulfur metabolism; glutathione biosynthesis; glutathione from L-cysteine and L-glutamate: step 2/2. This chain is Glutathione synthetase, found in Vibrio cholerae serotype O1 (strain ATCC 39315 / El Tor Inaba N16961).